The primary structure comprises 373 residues: Histidinol-phosphate aminotransferase (373 aa).

Position 230 is an N6-(pyridoxal phosphate)lysine (Lys-230).

This sequence belongs to the class-II pyridoxal-phosphate-dependent aminotransferase family. Histidinol-phosphate aminotransferase subfamily. Homodimer. Pyridoxal 5'-phosphate serves as cofactor.

It catalyses the reaction L-histidinol phosphate + 2-oxoglutarate = 3-(imidazol-4-yl)-2-oxopropyl phosphate + L-glutamate. It functions in the pathway amino-acid biosynthesis; L-histidine biosynthesis; L-histidine from 5-phospho-alpha-D-ribose 1-diphosphate: step 7/9. The protein is Histidinol-phosphate aminotransferase of Synechococcus sp. (strain ATCC 27144 / PCC 6301 / SAUG 1402/1) (Anacystis nidulans).